The chain runs to 244 residues: MGRGRVELKRIENKINRQVTFAKRRNGLLKKAYELSVLCDAEVALIIFSTRGKLYEFCSSSSMLKTLERYQKCSYGAVEVSRPSKELEQSSYREYLKLKSKFESLQRTQRNLLGEDLGPLNTKELEQLERQLETSLKQVRSTKTQFMLDQLSDLQNKEQVLVESNKALTRKLDEISVKNHLQLSWESGEQSMPYGHQQAQSQGFFQPLECNPTLQIGYNPAGSSQLSAPSNAQNVNGFIPGWML.

Residues 1–61 (MGRGRVELKR…GKLYEFCSSS (61 aa)) form the MADS-box domain. The 91-residue stretch at 88–178 (EQSSYREYLK…TRKLDEISVK (91 aa)) folds into the K-box domain.

In terms of tissue distribution, expressed in flowers and seeds.

The protein localises to the nucleus. In terms of biological role, probable transcription factor involved in flower development. This chain is Agamous-like MADS-box protein MADS2, found in Vitis vinifera (Grape).